Reading from the N-terminus, the 380-residue chain is Lipid-A-disaccharide synthase (380 aa).

It belongs to the LpxB family.

The enzyme catalyses a lipid X + a UDP-2-N,3-O-bis[(3R)-3-hydroxyacyl]-alpha-D-glucosamine = a lipid A disaccharide + UDP + H(+). The protein operates within bacterial outer membrane biogenesis; LPS lipid A biosynthesis. In terms of biological role, condensation of UDP-2,3-diacylglucosamine and 2,3-diacylglucosamine-1-phosphate to form lipid A disaccharide, a precursor of lipid A, a phosphorylated glycolipid that anchors the lipopolysaccharide to the outer membrane of the cell. The chain is Lipid-A-disaccharide synthase from Francisella philomiragia subsp. philomiragia (strain ATCC 25017 / CCUG 19701 / FSC 153 / O#319-036).